Here is an 816-residue protein sequence, read N- to C-terminus: Phosphatidylinositol 4-kinase beta (816 aa).

3 disordered regions span residues 1-30, 99-120, and 248-318; these read MGDTVVEPAPLKPTSEPTSGPPGNNGGSLL, EEEDEMGASVASGTAKGARRRR, and AHRK…SFSS. Position 2 is an N-acetylglycine (Gly-2). The interval 2–68 is interaction with ACBD3; the sequence is GDTVVEPAPL…VKLLHGGVAV (67 aa). Residues 52–242 form the PIK helical domain; the sequence is CQDVLEKVKL…GTKLRKLILS (191 aa). Ser-258 carries the post-translational modification Phosphoserine. Thr-263 bears the Phosphothreonine mark. Phosphoserine is present on residues Ser-266, Ser-275, Ser-277, Ser-284, and Ser-294. Composition is skewed to polar residues over residues 278 to 297 and 306 to 318; these read DATASISLSSNLKRTASNPK and SSSTESIDNSFSS. Ser-428 is subject to Phosphoserine. Thr-438 bears the Phosphothreonine mark. Ser-511 is modified (phosphoserine). A phosphothreonine mark is found at Thr-517 and Thr-519. The PI3K/PI4K catalytic domain occupies 535–801; it reads EPWQEKVRRI…MVDGSMRSIT (267 aa). Positions 541–547 are G-loop; the sequence is VRRIREG. Residues 668 to 676 form a catalytic loop region; it reads QVKDRHNGN. The tract at residues 687-711 is activation loop; the sequence is HIDFGFILSSSPRNLGFETSAFKLT.

Belongs to the PI3/PI4-kinase family. Type III PI4K subfamily. Interacts with ARF1 and ARF3 in the Golgi complex, but not with ARF4, ARF5 or ARF6. Interacts with NCS1/FREQ in a calcium-independent manner. Interacts with CALN1/CABP8 and CALN2/CABP7; in a calcium-dependent manner; this interaction competes with NCS1/FREQ binding. Interacts with ACBD3. Interacts with ARMH3, YWHAB, YWHAE, YWHAG, YWHAH, YWHAQ, YWHAZ and SFN. Interacts with GGA2 (via VHS domain); the interaction is important for PI4KB location at the Golgi apparatus membrane. Interacts with ATG9A. Mg(2+) serves as cofactor. Requires Mn(2+) as cofactor.

The protein localises to the endomembrane system. The protein resides in the mitochondrion outer membrane. It is found in the rough endoplasmic reticulum membrane. It localises to the golgi apparatus. Its subcellular location is the golgi apparatus membrane. It catalyses the reaction a 1,2-diacyl-sn-glycero-3-phospho-(1D-myo-inositol) + ATP = a 1,2-diacyl-sn-glycero-3-phospho-(1D-myo-inositol 4-phosphate) + ADP + H(+). Its activity is regulated as follows. Inhibited by wortmannin. Increased kinase activity upon interaction with NCS1/FREQ. Phosphorylates phosphatidylinositol (PI) in the first committed step in the production of the second messenger inositol-1,4,5,-trisphosphate (PIP). May regulate Golgi disintegration/reorganization during mitosis, possibly via its phosphorylation. Involved in Golgi-to-plasma membrane trafficking. In Callithrix jacchus (White-tufted-ear marmoset), this protein is Phosphatidylinositol 4-kinase beta (PI4KB).